Consider the following 72-residue polypeptide: ATP synthase subunit c (72 aa).

Transmembrane regions (helical) follow at residues 1 to 21 and 48 to 68; these read MSLGVLAAAIAVGLGALGAGI and MFIGVALVEALPIIGVVFSFI.

This sequence belongs to the ATPase C chain family. F-type ATPases have 2 components, F(1) - the catalytic core - and F(0) - the membrane proton channel. F(1) has five subunits: alpha(3), beta(3), gamma(1), delta(1), epsilon(1). F(0) has three main subunits: a(1), b(2) and c(10-14). The alpha and beta chains form an alternating ring which encloses part of the gamma chain. F(1) is attached to F(0) by a central stalk formed by the gamma and epsilon chains, while a peripheral stalk is formed by the delta and b chains.

The protein localises to the cell membrane. In terms of biological role, f(1)F(0) ATP synthase produces ATP from ADP in the presence of a proton or sodium gradient. F-type ATPases consist of two structural domains, F(1) containing the extramembraneous catalytic core and F(0) containing the membrane proton channel, linked together by a central stalk and a peripheral stalk. During catalysis, ATP synthesis in the catalytic domain of F(1) is coupled via a rotary mechanism of the central stalk subunits to proton translocation. Key component of the F(0) channel; it plays a direct role in translocation across the membrane. A homomeric c-ring of between 10-14 subunits forms the central stalk rotor element with the F(1) delta and epsilon subunits. The protein is ATP synthase subunit c of Geobacillus kaustophilus (strain HTA426).